The chain runs to 375 residues: ATP phosphoribosyltransferase regulatory subunit (375 aa).

This sequence belongs to the class-II aminoacyl-tRNA synthetase family. HisZ subfamily. In terms of assembly, heteromultimer composed of HisG and HisZ subunits.

The protein resides in the cytoplasm. Its pathway is amino-acid biosynthesis; L-histidine biosynthesis; L-histidine from 5-phospho-alpha-D-ribose 1-diphosphate: step 1/9. Required for the first step of histidine biosynthesis. May allow the feedback regulation of ATP phosphoribosyltransferase activity by histidine. In Agrobacterium fabrum (strain C58 / ATCC 33970) (Agrobacterium tumefaciens (strain C58)), this protein is ATP phosphoribosyltransferase regulatory subunit.